We begin with the raw amino-acid sequence, 331 residues long: Protein RecA (331 aa).

67–74 (GPESSGKT) contacts ATP.

The protein belongs to the RecA family.

The protein localises to the cytoplasm. In terms of biological role, can catalyze the hydrolysis of ATP in the presence of single-stranded DNA, the ATP-dependent uptake of single-stranded DNA by duplex DNA, and the ATP-dependent hybridization of homologous single-stranded DNAs. It interacts with LexA causing its activation and leading to its autocatalytic cleavage. This chain is Protein RecA, found in Wigglesworthia glossinidia brevipalpis.